Reading from the N-terminus, the 260-residue chain is uncharacterized protein (260 aa).

A signal peptide spans 1–22 (MGYIKRIGLYISIFILIVMVAG). Residue Cys23 is the site of N-palmitoyl cysteine attachment. The S-diacylglycerol cysteine moiety is linked to residue Cys23.

Belongs to the staphylococcal tandem lipoprotein family.

It localises to the cell membrane. This is an uncharacterized protein from Staphylococcus aureus (strain bovine RF122 / ET3-1).